A 209-amino-acid polypeptide reads, in one-letter code: Large ribosomal subunit protein uL3 (209 aa).

Residues 127–164 (NFSGGQRTHGQSDRLRAPGSVGGASDPSRTFKGTKMGG) form a disordered region.

It belongs to the universal ribosomal protein uL3 family. In terms of assembly, part of the 50S ribosomal subunit. Forms a cluster with proteins L14 and L19.

Functionally, one of the primary rRNA binding proteins, it binds directly near the 3'-end of the 23S rRNA, where it nucleates assembly of the 50S subunit. This Chlorobium phaeobacteroides (strain BS1) protein is Large ribosomal subunit protein uL3.